A 350-amino-acid chain; its full sequence is Geranylgeranyl pyrophosphate synthase (350 aa).

K66, R69, and H98 together coordinate isopentenyl diphosphate. 2 residues coordinate Mg(2+): D105 and D109. R114 is a binding site for dimethylallyl diphosphate. An isopentenyl diphosphate-binding site is contributed by R115. 5 residues coordinate dimethylallyl diphosphate: K200, T201, Q236, N243, and K263.

The protein belongs to the FPP/GGPP synthase family. Mg(2+) is required as a cofactor.

The catalysed reaction is isopentenyl diphosphate + dimethylallyl diphosphate = (2E)-geranyl diphosphate + diphosphate. The enzyme catalyses isopentenyl diphosphate + (2E)-geranyl diphosphate = (2E,6E)-farnesyl diphosphate + diphosphate. It carries out the reaction isopentenyl diphosphate + (2E,6E)-farnesyl diphosphate = (2E,6E,10E)-geranylgeranyl diphosphate + diphosphate. It participates in secondary metabolite biosynthesis; terpenoid biosynthesis. Functionally, geranylgeranyl pyrophosphate synthase; part of the gene cluster that mediates the biosynthesis of pleuromutilin, a tricyclic diterpene showing antibacterial properties. The geranylgeranyl diphosphate (GGPP) synthase catalyzes the first step in pleuromutilin biosynthesis. GGPP is then substrate of the premutilin synthase (PS) to yield premutilin. Premutilin synthase is a bifunctional enzyme composed of the fusion of a class II diterpene cyclase (DTC) and a class I diterpene synthase (DTS), with the corresponding domains and active sites containing characteristic aspartate-rich motifs. GGPP is first converted to mutildienyl-diphosphate (MPP) at the class II DTC site. MPP is subsequently further cyclized at the class I DTS site, followed by a 1,5-hydride shift and addition of water prior to terminating deprotonation, to yield premutilin. In addition to the aforementioned GGPP synthase and bifunctional diterpene synthase, the cluster also contains three cytochrome P450 monooxygenases, a short-chain alcohol dehydrogenase, and an acyltransferase, involved in the conversion of premutilin to pleuromutilin. The cytochrome P450 monooxygenases P450-1 and P450-2 hydroxylate premutilin at C-11 and C-3, respectively, producing 11-hydroxypremutilin and 3-hydroxypremutilin. The combination of the actions of both ple5 and ple6 leads to the production of 3,11-dihydroxypremutilin. The short chain dehydrogenase SDR further converts 3,11-dihydroxypremutilin into mutilin. The acetyltransferase ATF then acetylates mutilin to produce 14-O-acetylmutilin. Finally, the cytochrome P450 monooxygenase P450-3 catalyzes hydroxylation on the alpha position of the acetyl side chain of 14-O-acetylmutilin to yield pleuromutilin. The protein is Geranylgeranyl pyrophosphate synthase of Clitopilus passeckerianus (Pleurotus passeckerianus).